A 170-amino-acid polypeptide reads, in one-letter code: Crossover junction endodeoxyribonuclease RuvC (170 aa).

Active-site residues include Asp-8, Glu-67, and Asp-139. Asp-8, Glu-67, and Asp-139 together coordinate Mg(2+).

It belongs to the RuvC family. In terms of assembly, homodimer which binds Holliday junction (HJ) DNA. The HJ becomes 2-fold symmetrical on binding to RuvC with unstacked arms; it has a different conformation from HJ DNA in complex with RuvA. In the full resolvosome a probable DNA-RuvA(4)-RuvB(12)-RuvC(2) complex forms which resolves the HJ. Requires Mg(2+) as cofactor.

The protein localises to the cytoplasm. The enzyme catalyses Endonucleolytic cleavage at a junction such as a reciprocal single-stranded crossover between two homologous DNA duplexes (Holliday junction).. Functionally, the RuvA-RuvB-RuvC complex processes Holliday junction (HJ) DNA during genetic recombination and DNA repair. Endonuclease that resolves HJ intermediates. Cleaves cruciform DNA by making single-stranded nicks across the HJ at symmetrical positions within the homologous arms, yielding a 5'-phosphate and a 3'-hydroxyl group; requires a central core of homology in the junction. The consensus cleavage sequence is 5'-(A/T)TT(C/G)-3'. Cleavage occurs on the 3'-side of the TT dinucleotide at the point of strand exchange. HJ branch migration catalyzed by RuvA-RuvB allows RuvC to scan DNA until it finds its consensus sequence, where it cleaves and resolves the cruciform DNA. In Pectobacterium atrosepticum (strain SCRI 1043 / ATCC BAA-672) (Erwinia carotovora subsp. atroseptica), this protein is Crossover junction endodeoxyribonuclease RuvC.